Here is a 330-residue protein sequence, read N- to C-terminus: 4-hydroxythreonine-4-phosphate dehydrogenase (330 aa).

Residues H136 and T137 each coordinate substrate. A divalent metal cation contacts are provided by H166, H211, and H266. Substrate contacts are provided by K274, N283, and R292.

The protein belongs to the PdxA family. As to quaternary structure, homodimer. Zn(2+) serves as cofactor. Requires Mg(2+) as cofactor. The cofactor is Co(2+).

It is found in the cytoplasm. It carries out the reaction 4-(phosphooxy)-L-threonine + NAD(+) = 3-amino-2-oxopropyl phosphate + CO2 + NADH. Its pathway is cofactor biosynthesis; pyridoxine 5'-phosphate biosynthesis; pyridoxine 5'-phosphate from D-erythrose 4-phosphate: step 4/5. In terms of biological role, catalyzes the NAD(P)-dependent oxidation of 4-(phosphooxy)-L-threonine (HTP) into 2-amino-3-oxo-4-(phosphooxy)butyric acid which spontaneously decarboxylates to form 3-amino-2-oxopropyl phosphate (AHAP). This Erwinia tasmaniensis (strain DSM 17950 / CFBP 7177 / CIP 109463 / NCPPB 4357 / Et1/99) protein is 4-hydroxythreonine-4-phosphate dehydrogenase.